The following is a 360-amino-acid chain: Blue-light-activated histidine kinase 1 (360 aa).

Residues 38–109 (LFLETTQQTR…KLREGIAAER (72 aa)) form the PAS domain. The residue at position 85 (cysteine 85) is an S-4a-FMN cysteine. Residues 109–163 (RYTVVDLLNYRKDGIPFWNAVHVGPIYGEDGTLQYFYGSQWDITDIVAERRKAET) enclose the PAC domain. Histidine 173 bears the Phosphohistidine; by autocatalysis mark. Residues 260–303 (RSVTALGLALHELATNAVKYGALSVDAGRVEISWSREDGDVTLV) form an HWE histidine kinase domain region.

In terms of processing, FMN binds covalently to cysteine after exposure to blue light and this bond is spontaneously broken in the dark.

It carries out the reaction ATP + protein L-histidine = ADP + protein N-phospho-L-histidine.. Photosensitive kinase that is involved in increased bacterial virulence upon exposure to light. This is Blue-light-activated histidine kinase 1 from Erythrobacter litoralis (strain HTCC2594).